A 464-amino-acid chain; its full sequence is tRNA modification GTPase MnmE (464 aa).

3 residues coordinate (6S)-5-formyl-5,6,7,8-tetrahydrofolate: Arg-27, Glu-90, and Lys-129. In terms of domain architecture, TrmE-type G spans 222–384 (GVALVLAGSV…LYDKIRALIS (163 aa)). GTP-binding positions include 232-237 (NAGKSS), 251-257 (SSYPGTT), and 276-279 (DTAG). Mg(2+) is bound by residues Ser-236 and Thr-257. Lys-464 contributes to the (6S)-5-formyl-5,6,7,8-tetrahydrofolate binding site.

It belongs to the TRAFAC class TrmE-Era-EngA-EngB-Septin-like GTPase superfamily. TrmE GTPase family. As to quaternary structure, homodimer. Heterotetramer of two MnmE and two MnmG subunits. It depends on K(+) as a cofactor.

The protein resides in the cytoplasm. In terms of biological role, exhibits a very high intrinsic GTPase hydrolysis rate. Involved in the addition of a carboxymethylaminomethyl (cmnm) group at the wobble position (U34) of certain tRNAs, forming tRNA-cmnm(5)s(2)U34. This Borreliella burgdorferi (strain ATCC 35210 / DSM 4680 / CIP 102532 / B31) (Borrelia burgdorferi) protein is tRNA modification GTPase MnmE.